The chain runs to 338 residues: Glycerol-3-phosphate dehydrogenase [NAD(P)+] (338 aa).

Residues serine 12, tryptophan 13, lysine 34, and lysine 110 each coordinate NADPH. Residues lysine 110, glycine 141, and serine 143 each coordinate sn-glycerol 3-phosphate. NADPH is bound at residue alanine 145. Positions 196, 249, 259, 260, and 261 each coordinate sn-glycerol 3-phosphate. The active-site Proton acceptor is lysine 196. Arginine 260 is a binding site for NADPH. Residues valine 284 and glutamate 286 each coordinate NADPH.

Belongs to the NAD-dependent glycerol-3-phosphate dehydrogenase family.

The protein localises to the cytoplasm. It carries out the reaction sn-glycerol 3-phosphate + NAD(+) = dihydroxyacetone phosphate + NADH + H(+). The catalysed reaction is sn-glycerol 3-phosphate + NADP(+) = dihydroxyacetone phosphate + NADPH + H(+). It functions in the pathway membrane lipid metabolism; glycerophospholipid metabolism. Catalyzes the reduction of the glycolytic intermediate dihydroxyacetone phosphate (DHAP) to sn-glycerol 3-phosphate (G3P), the key precursor for phospholipid synthesis. The polypeptide is Glycerol-3-phosphate dehydrogenase [NAD(P)+] (Ligilactobacillus salivarius (strain UCC118) (Lactobacillus salivarius)).